The sequence spans 152 residues: MGLSTLEQKLTAMVSAPVEALGFEFVGLEFIRGRVSTLRIYIDSEEGITVDDCADVSHQVSAVLDVEDPIQTFYNLEISSPGLERPLFTTTHYEQFIGEEVAVVLRIAMQNRRKWQGIIKSVAGEMITVTVDGKDEVFALSNIQKANLVPHF.

It belongs to the RimP family.

It localises to the cytoplasm. Functionally, required for maturation of 30S ribosomal subunits. This is Ribosome maturation factor RimP from Proteus mirabilis (strain HI4320).